The following is a 148-amino-acid chain: HTH-type transcriptional regulator Ptr1 (148 aa).

In terms of domain architecture, HTH asnC-type spans 2-63; sequence LDRIDLKILR…SINPKNLGFE (62 aa). The H-T-H motif DNA-binding region spans 21-40; that stretch reads FREIGRELGISEGTVRNRVK.

Homodimer.

Participates in positive as well as negative regulation of transcription. Binds to its own promoter. This chain is HTH-type transcriptional regulator Ptr1 (ptr1), found in Methanocaldococcus jannaschii (strain ATCC 43067 / DSM 2661 / JAL-1 / JCM 10045 / NBRC 100440) (Methanococcus jannaschii).